Consider the following 208-residue polypeptide: Putative chemokine-related protein FP248 (208 aa).

An N-terminal signal peptide occupies residues 1-23; sequence MGTGGSLLCGCSLVLSCLCPSAS. Asn-29 carries an N-linked (GlcNAc...) asparagine glycan.

It localises to the secreted. In Homo sapiens (Human), this protein is Putative chemokine-related protein FP248.